The primary structure comprises 298 residues: MNDLFSNSFKKNQAQLGDVEAGQETMNLDKFFEDVENVKDDMKGVEALYKKLQDSNEECKTVHNAKKVKELRAKMDGDVAMVLKRVKIIKQKLEALEKANANSRNVPGCGPGSSTDRTRSSVVSGLGKKLKDLMDSFQGLRARMNNEYKETVERRYFTITGEKADEQTIDNLIASGESENFLQKAIQEQGRGQILDTISEIQERHDAVKEIEKNLLELHQVFLDMAALVEAQGQQLNNIESHVAKASSFVRRGTDQLQDAREYQKSSRKWTCYAIILFIVIFILLLIPLLPHIMLMLK.

Met1 is modified (N-acetylmethionine). At 1–274 (MNDLFSNSFK…KSSRKWTCYA (274 aa)) the chain is on the cytoplasmic side. Residues 25–155 (TMNLDKFFED…NEYKETVERR (131 aa)) are a coiled coil. Positions 198 to 260 (ISEIQERHDA…RRGTDQLQDA (63 aa)) constitute a t-SNARE coiled-coil homology domain. Residues 275 to 295 (IILFIVIFILLLIPLLPHIML) form a helical; Anchor for type IV membrane protein membrane-spanning segment. Over 296–298 (MLK) the chain is Vesicular.

It belongs to the syntaxin family. In terms of assembly, part of the t-SNARE complex.

It is found in the membrane. In terms of biological role, vesicle trafficking protein that functions in the secretory pathway. In Arabidopsis thaliana (Mouse-ear cress), this protein is Syntaxin-125 (SYP125).